We begin with the raw amino-acid sequence, 306 residues long: D-alanine--D-alanine ligase (306 aa).

The ATP-grasp domain maps to 107-300 (KEAYRAAGLP…FGQLCAWMVE (194 aa)). ATP is bound at residue 134–184 (MQPPYVVKPYNEGSSVGVYIVTEAANGPPVLAPDLPATLMVEEYVPGRELS). Residues Asp251, Glu267, and Asn269 each contribute to the Mg(2+) site.

Belongs to the D-alanine--D-alanine ligase family. Requires Mg(2+) as cofactor. Mn(2+) is required as a cofactor.

Its subcellular location is the cytoplasm. The enzyme catalyses 2 D-alanine + ATP = D-alanyl-D-alanine + ADP + phosphate + H(+). It participates in cell wall biogenesis; peptidoglycan biosynthesis. In terms of biological role, cell wall formation. The sequence is that of D-alanine--D-alanine ligase from Ruegeria pomeroyi (strain ATCC 700808 / DSM 15171 / DSS-3) (Silicibacter pomeroyi).